The chain runs to 195 residues: Transcriptional regulator LdrP (195 aa).

Residues 110-182 (GELRARIARY…YRRVYLLDLA (73 aa)) enclose the HTH crp-type domain. The segment at residues 142 to 161 (HEEIADATASIRESVSKVLA) is a DNA-binding region (H-T-H motif).

Homodimer.

Functionally, activates transcription. Positively regulates PcrtB promoter upstream of the crtB operon in a cAMP-independent manner. Regulated genes include genes encoding DNA photolyase, phytoene synthase and cytochrome P450 monooxygenase, which are involved in carotenoid biosynthesis. Positively regulates the light-inducible gene cluster in the megaplasmid in a cAMP-independent manner. This Thermus thermophilus (strain ATCC 27634 / DSM 579 / HB8) protein is Transcriptional regulator LdrP.